We begin with the raw amino-acid sequence, 131 residues long: Sulfurtransferase TusD (131 aa).

The active-site Cysteine persulfide intermediate is the cysteine 81.

The protein belongs to the DsrE/TusD family. In terms of assembly, heterohexamer, formed by a dimer of trimers. The hexameric TusBCD complex contains 2 copies each of TusB, TusC and TusD. The TusBCD complex interacts with TusE.

It localises to the cytoplasm. Functionally, part of a sulfur-relay system required for 2-thiolation of 5-methylaminomethyl-2-thiouridine (mnm(5)s(2)U) at tRNA wobble positions. Accepts sulfur from TusA and transfers it in turn to TusE. The sequence is that of Sulfurtransferase TusD from Photorhabdus laumondii subsp. laumondii (strain DSM 15139 / CIP 105565 / TT01) (Photorhabdus luminescens subsp. laumondii).